A 287-amino-acid polypeptide reads, in one-letter code: Zinc finger protein SNAI3 (287 aa).

The SNAG domain stretch occupies residues 1 to 20; sequence MPRSFLVKTHSSHRVPNYGK. 4 C2H2-type zinc fingers span residues 147–169, 178–200, 204–226, and 232–254; these read FECI…QQLH, FTCR…IRTH, CICK…IRTH, and YTCS…LQTH. The C2H2-type 5; degenerate zinc finger occupies 260–282; it reads YRCAVCPKAFSRMSLLARHEEAG.

It belongs to the snail C2H2-type zinc-finger protein family. In terms of tissue distribution, highly expressed in skeletal muscle and thymus. Lower expression in heart, lung and spleen.

The protein localises to the nucleus. Its function is as follows. Seems to inhibit myoblast differentiation. Transcriptional repressor of E-box-dependent transactivation of downstream myogenic bHLHs genes. Binds preferentially to the canonical E-box sequences 5'-CAGGTG-3' and 5'-CACCTG-3'. In Mus musculus (Mouse), this protein is Zinc finger protein SNAI3 (Snai3).